The following is a 710-amino-acid chain: Probable GTP diphosphokinase RSH2, chloroplastic (710 aa).

Residues 1 to 63 (MVVATTIALY…SSLFSSASVK (63 aa)) constitute a chloroplast transit peptide. The 105-residue stretch at 233–337 (YLQHCVETAM…IKLADRLHNM (105 aa)) folds into the HD domain.

This sequence belongs to the RelA/SpoT family.

It localises to the plastid. The protein localises to the chloroplast. The catalysed reaction is GTP + ATP = guanosine 3'-diphosphate 5'-triphosphate + AMP. Functionally, probable ppGpp (guanosine 3'-diphosphate 5'-diphosphate) synthetase that may be involved in a rapid plant ppGpp-mediated response to pathogens and other stresses. In Arabidopsis thaliana (Mouse-ear cress), this protein is Probable GTP diphosphokinase RSH2, chloroplastic (RSH2).